Consider the following 167-residue polypeptide: Leptin (167 aa).

Positions 1 to 21 are cleaved as a signal peptide; sequence MHCVPLFCFLWFCHHLYYSQA. Cys117 and Cys167 form a disulfide bridge.

It belongs to the leptin family.

The protein localises to the secreted. Key player in the regulation of energy balance and body weight control. Once released into the circulation, has central and peripheral effects by binding LEPR, found in many tissues, which results in the activation of several major signaling pathways. In the hypothalamus, acts as an appetite-regulating factor that induces a decrease in food intake and an increase in energy consumption by inducing anorexinogenic factors and suppressing orexigenic neuropeptides, also regulates bone mass and secretion of hypothalamo-pituitary-adrenal hormones. In the periphery, increases basal metabolism, influences reproductive function, regulates pancreatic beta-cell function and insulin secretion, is pro-angiogenic for endothelial cell and affects innate and adaptive immunity. In the arcuate nucleus of the hypothalamus, activates by depolarization POMC neurons inducing FOS and SOCS3 expression to release anorexigenic peptides and inhibits by hyperpolarization NPY neurons inducing SOCS3 with a consequent reduction on release of orexigenic peptides. In addition to its known satiety inducing effect, has a modulatory role in nutrient absorption. In the intestine, reduces glucose absorption by enterocytes by activating PKC and leading to a sequential activation of p38, PI3K and ERK signaling pathways which exerts an inhibitory effect on glucose absorption. Acts as a growth factor on certain tissues, through the activation of different signaling pathways increases expression of genes involved in cell cycle regulation such as CCND1, via JAK2-STAT3 pathway, or VEGFA, via MAPK1/3 and PI3K-AKT1 pathways. May also play an apoptotic role via JAK2-STAT3 pathway and up-regulation of BIRC5 expression. Pro-angiogenic, has mitogenic activity on vascular endothelial cells and plays a role in matrix remodeling by regulating the expression of matrix metalloproteinases (MMPs) and tissue inhibitors of metalloproteinases (TIMPs). In innate immunity, modulates the activity and function of neutrophils by increasing chemotaxis and the secretion of oxygen radicals. Increases phagocytosis by macrophages and enhances secretion of pro-inflammatory mediators. Increases cytotoxic ability of NK cells. Plays a pro-inflammatory role, in synergy with IL1B, by inducing NOS2 which promotes the production of IL6, IL8 and Prostaglandin E2, through a signaling pathway that involves JAK2, PI3K, MAP2K1/MEK1 and MAPK14/p38. In adaptive immunity, promotes the switch of memory T-cells towards T helper-1 cell immune responses. Increases CD4(+)CD25(-) T-cell proliferation and reduces autophagy during TCR (T-cell receptor) stimulation, through MTOR signaling pathway activation and BCL2 up-regulation. The chain is Leptin (LEP) from Sminthopsis crassicaudata (Fat-tailed dunnart).